Reading from the N-terminus, the 88-residue chain is Sec-independent protein translocase protein TatA (88 aa).

A helical transmembrane segment spans residues 1 to 21; it reads MGGIGIWQLAIITVIVILLFG. Residues 46-88 form a disordered region; that stretch reads DNDKDSTQVDDKDSTQVDDNAKQPSNKKVEENIKEQSKEKDRA.

It belongs to the TatA/E family. The Tat system comprises two distinct complexes: a TatABC complex, containing multiple copies of TatA, TatB and TatC subunits, and a separate TatA complex, containing only TatA subunits. Substrates initially bind to the TatABC complex, which probably triggers association of the separate TatA complex to form the active translocon.

It localises to the cell inner membrane. Its function is as follows. Part of the twin-arginine translocation (Tat) system that transports large folded proteins containing a characteristic twin-arginine motif in their signal peptide across membranes. TatA could form the protein-conducting channel of the Tat system. The sequence is that of Sec-independent protein translocase protein TatA from Psychromonas ingrahamii (strain DSM 17664 / CCUG 51855 / 37).